The chain runs to 253 residues: 7-carboxy-7-deazaguanine synthase (253 aa).

Residues 12-14 (WQG) and Arg32 each bind substrate. The Radical SAM core domain maps to 23 to 253 (AFGRRQIFVR…FQVHKYLNVL (231 aa)). The [4Fe-4S] cluster site is built by Cys36, Cys40, and Cys43. Position 45 (Ser45) interacts with Mg(2+). Thr98 contributes to the substrate binding site. Gly100 provides a ligand contact to S-adenosyl-L-methionine.

This sequence belongs to the radical SAM superfamily. 7-carboxy-7-deazaguanine synthase family. As to quaternary structure, homodimer. [4Fe-4S] cluster is required as a cofactor. S-adenosyl-L-methionine serves as cofactor. It depends on Mg(2+) as a cofactor.

It carries out the reaction 6-carboxy-5,6,7,8-tetrahydropterin + H(+) = 7-carboxy-7-deazaguanine + NH4(+). The protein operates within purine metabolism; 7-cyano-7-deazaguanine biosynthesis. Catalyzes the complex heterocyclic radical-mediated conversion of 6-carboxy-5,6,7,8-tetrahydropterin (CPH4) to 7-carboxy-7-deazaguanine (CDG), a step common to the biosynthetic pathways of all 7-deazapurine-containing compounds. The polypeptide is 7-carboxy-7-deazaguanine synthase (Thermococcus kodakarensis (strain ATCC BAA-918 / JCM 12380 / KOD1) (Pyrococcus kodakaraensis (strain KOD1))).